A 506-amino-acid polypeptide reads, in one-letter code: Cytochrome P450 94B3 (506 aa).

The chain crosses the membrane as a helical span at residues 2 to 22 (AFLLSFLILAFLITIIFFLSS). Position 447 (cysteine 447) interacts with heme.

Belongs to the cytochrome P450 family. Heme is required as a cofactor.

It localises to the membrane. It is found in the endoplasmic reticulum membrane. It carries out the reaction a jasmonyl-L-amino acid + reduced [NADPH--hemoprotein reductase] + O2 = a 12-hydroxyjasmonyl-L-alpha-amino acid + oxidized [NADPH--hemoprotein reductase] + H2O + H(+). The catalysed reaction is L-isoleucine-(+)-7-isojasmonate + NADPH + O2 + H(+) = L-isoleucine-(+)-12-hydroxy-7-isojasmonate + NADP(+) + H2O. It catalyses the reaction a jasmonyl-L-isoleucinate + NADPH + O2 + H(+) = L-isoleucine-12-hydroxyjasmonate + NADP(+) + H2O. Functionally, hydroxylase involved in the oxidation of the plant hormone jasmonoyl-L-isoleucine (JA-Ile), a bioactive phytohormone of the jasmonate-mediated signaling pathway. Converts JA-Ile to 12-hydroxy-JA-Ile. Exerts negative feedback control on JA-Ile levels and plays a key role in attenuation of jasmonate responses. Negatively regulates the expression of wound-induced genes TIFY11A/JAZ5, TIFY5A/JAZ8 and TIFY5A/JAZ10. Catalyzes the hydroxylation of jasmonoyl-L-valine (JA-Val), jasmonoyl-L-leucine (JA-Leu) and jasmonoyl-L-phenylalanine (JA-Phe) in vitro. Converts JA-Val, JA-Leu and JA-Phe to 12-hydroxy-JA-Val, 12-hydroxy-JA-Leu and 12-hydroxy-JA-Phe, respectively. The chain is Cytochrome P450 94B3 from Arabidopsis thaliana (Mouse-ear cress).